The sequence spans 510 residues: ETS translocation variant 5 (510 aa).

The tract at residues 132–245 (KPLTPPATPL…PGDSRPSYHR (114 aa)) is disordered. Over residues 163–174 (TPGAGPVQGVGP) the composition is skewed to low complexity. Residues 211–224 (QYPSEQRFQRQLSE) are compositionally biased toward polar residues. The residue at position 248 (S248) is a Phosphoserine. K350 participates in a covalent cross-link: Glycyl lysine isopeptide (Lys-Gly) (interchain with G-Cter in SUMO2). The segment at residues 368–448 (LQLWQFLVTL…AGERYVYKFV (81 aa)) is a DNA-binding region (ETS).

It belongs to the ETS family. Interacts (via C-terminal) with ZMYM5 (via N-terminal 120 amino acid region). In terms of tissue distribution, in the brain, expressed predominantly in the cerebral cortex, the amygdala and the hypothalamus. Within the cerebral cortex, there is conspicuously high expression in cortical layers 2, 4 and 6 while expression is almost absent from layers 1, 3 and 5. High expression is also observed in the dorsal and ventral endopiriform claustrum. Strong expression is observed in limited parts of the amygdala including the basolateral amygdaloid nucleus, the bed stria terminalis and the central amygdaloid nucleus. Low to moderate levels are found in the hypothalamus while expression is almost absent in the thalamus. Hypothalamic expression is seen in the dorsomedial hypothalamic nucleus and also the central, dorsomedial and ventrolateral parts of the ventromedial hypothalamic nucleus. Strong expression is also identified in the nigrostriatal tract. In the mesencephalon, expression is restricted to the ventral tegmental area including the parabrachial pigmented nucleus. In the hippocampus, strongly expressed in the pyramidal cell layer. Some expression is also found in the lacunosum moleculare layer. Low levels of expression in the cerebellum, including the granular, molecular and Purkinje cell layers.

It is found in the nucleus. Its function is as follows. Binds to DNA sequences containing the consensus nucleotide core sequence 5'-GGAA.-3'. This is ETS translocation variant 5 (Etv5) from Mus musculus (Mouse).